The chain runs to 76 residues: MPAKEKTFEESLNALEEIVQRLERGDVPLEEALAAFQEGMALSKQCQDTLEKAEKTLTKMMTENNEEIVFEESEEA.

The protein belongs to the XseB family. As to quaternary structure, heterooligomer composed of large and small subunits.

Its subcellular location is the cytoplasm. The catalysed reaction is Exonucleolytic cleavage in either 5'- to 3'- or 3'- to 5'-direction to yield nucleoside 5'-phosphates.. Functionally, bidirectionally degrades single-stranded DNA into large acid-insoluble oligonucleotides, which are then degraded further into small acid-soluble oligonucleotides. In Enterococcus faecalis (strain ATCC 700802 / V583), this protein is Exodeoxyribonuclease 7 small subunit.